The primary structure comprises 610 residues: MSDQFDAKAFLKTVTSQPGVYRMYDAGGTVIYVGKAKDLKKRLSSYFRSNLASRKTEALVAQIQQIDVTVTHTETEALLLEHNYIKLYQPRYNVLLRDDKSYPFIFLSGDTHPRLAMHRGAKHAKGEYFGPFPNGYAVRETLALLQKIFPIRQCENSVYRNRSRPCLQYQIGRCLGPCVEGLVSEEEYAQQVEYVRLFLSGKDDQVLTQLISRMETASQNLEFEEAARIRDQIQAVRRVTEKQFVSNTGDDLDVIGVAFDAGMACVHVLFIRQGKVLGSRSYFPKVPGGTELSEVVETFVGQFYLQGSQMRTLPGEILLDFNLSDKTLLADSLSELAGRKINVQTKPRGDRARYLKLARTNAATALTSKLSQQSTVHQRLTALASVLKLPEVKRMECFDISHTMGEQTVASCVVFDANGPLRAEYRRYNITGITPGDDYAAMNQVLRRRYGKAIDDSKIPDVILIDGGKGQLAQAKNVFAELDVSWDKNHPLLLGVAKGADRKAGLETLFFEPEGEGFSLPPDSPALHVIQHIRDESHDHAIGGHRKKRAKVKNTSSLETIEGVGPKRRQMLLKYMGGLQGLRNASVEEIAKVPGISQGLAEKIFWSLKH.

Positions 16–94 constitute a GIY-YIG domain; it reads SQPGVYRMYD…IKLYQPRYNV (79 aa). The 36-residue stretch at 204–239 folds into the UVR domain; sequence DQVLTQLISRMETASQNLEFEEAARIRDQIQAVRRV.

This sequence belongs to the UvrC family. As to quaternary structure, interacts with UvrB in an incision complex.

It localises to the cytoplasm. Functionally, the UvrABC repair system catalyzes the recognition and processing of DNA lesions. UvrC both incises the 5' and 3' sides of the lesion. The N-terminal half is responsible for the 3' incision and the C-terminal half is responsible for the 5' incision. The protein is UvrABC system protein C of Escherichia coli O139:H28 (strain E24377A / ETEC).